The sequence spans 127 residues: Cytochrome c' (127 aa).

At Q1 the chain carries Pyrrolidone carboxylic acid. Heme c is bound by residues R12, Q13, D67, C116, C119, and H120.

As to quaternary structure, homodimer. Binds 1 heme c group covalently per subunit.

It localises to the periplasm. Its function is as follows. Cytochrome c' is the most widely occurring bacterial c-type cytochrome. Cytochromes c' are high-spin proteins and the heme has no sixth ligand. Their exact function is not known. The chain is Cytochrome c' from Alcaligenes xylosoxydans xylosoxydans (Achromobacter xylosoxidans).